Consider the following 352-residue polypeptide: Glycerol-3-phosphate dehydrogenase 1-like protein (352 aa).

Residue 13–18 (GSGNWG) participates in NAD(+) binding. Substrate is bound at residue lysine 123. NAD(+) is bound at residue alanine 156. The Proton acceptor role is filled by lysine 207. Residues arginine 272, lysine 299, and glutamine 301 each coordinate NAD(+). 272 to 273 (RN) lines the substrate pocket.

Belongs to the NAD-dependent glycerol-3-phosphate dehydrogenase family.

It is found in the cytoplasm. The enzyme catalyses sn-glycerol 3-phosphate + NAD(+) = dihydroxyacetone phosphate + NADH + H(+). Its function is as follows. Plays a role in regulating cardiac sodium current. The chain is Glycerol-3-phosphate dehydrogenase 1-like protein (gpd1l) from Xenopus tropicalis (Western clawed frog).